The primary structure comprises 254 residues: tRNA pseudouridine synthase A (254 aa).

Asp-52 functions as the Nucleophile in the catalytic mechanism. Tyr-111 lines the substrate pocket.

The protein belongs to the tRNA pseudouridine synthase TruA family. Homodimer.

It carries out the reaction uridine(38/39/40) in tRNA = pseudouridine(38/39/40) in tRNA. Functionally, formation of pseudouridine at positions 38, 39 and 40 in the anticodon stem and loop of transfer RNAs. The polypeptide is tRNA pseudouridine synthase A (Methylobacterium nodulans (strain LMG 21967 / CNCM I-2342 / ORS 2060)).